Reading from the N-terminus, the 305-residue chain is MTTRTEAVKAYLLDLQDRICAALETEDGGARFIEDAWTRPAGGGGRTRVIGDGAVIEKGGVNFSHVFGSGLPPSASAHRPELAGRGFEALGVSLVIHPHNPHVPTSHANVRFFIAEKEGEEPVWWFGGGFDLTPYYGNIDDCVHWHRVAERACAPFGADVYPRYKAWCDSYFHIKHRNEPRGIGGLFFDDLNEWDFDTSFAFMRAIGDAYIEAYLPIVQRRKAAAYTAQQREFQEFRRGRYVEFNLVYDRGTLFGLQSGGRTESILMSLPPQVRWGYDWKAEPGSEEARLTEYFLQDRDWLAASN.

Residue Ser-93 participates in substrate binding. His-97 and His-107 together coordinate a divalent metal cation. His-107 acts as the Proton donor in catalysis. Residue 109–111 (NVR) participates in substrate binding. Positions 146 and 176 each coordinate a divalent metal cation. An important for dimerization region spans residues 241 to 276 (YVEFNLVYDRGTLFGLQSGGRTESILMSLPPQVRWG). 259–261 (GGR) is a substrate binding site.

It belongs to the aerobic coproporphyrinogen-III oxidase family. In terms of assembly, homodimer. Requires a divalent metal cation as cofactor.

The protein resides in the cytoplasm. It catalyses the reaction coproporphyrinogen III + O2 + 2 H(+) = protoporphyrinogen IX + 2 CO2 + 2 H2O. It functions in the pathway porphyrin-containing compound metabolism; protoporphyrin-IX biosynthesis; protoporphyrinogen-IX from coproporphyrinogen-III (O2 route): step 1/1. Involved in the heme biosynthesis. Catalyzes the aerobic oxidative decarboxylation of propionate groups of rings A and B of coproporphyrinogen-III to yield the vinyl groups in protoporphyrinogen-IX. This Pseudomonas fluorescens (strain ATCC BAA-477 / NRRL B-23932 / Pf-5) protein is Oxygen-dependent coproporphyrinogen-III oxidase.